Here is a 413-residue protein sequence, read N- to C-terminus: Multifunctional CCA protein (413 aa).

The ATP site is built by Gly-8 and Arg-11. CTP is bound by residues Gly-8 and Arg-11. Residues Glu-21 and Asp-23 each coordinate Mg(2+). ATP-binding residues include Arg-91, Arg-137, and Arg-140. The CTP site is built by Arg-91, Arg-137, and Arg-140. The HD domain maps to 228-329 (CGIHTLMSLR…WRLLQRLDVL (102 aa)).

This sequence belongs to the tRNA nucleotidyltransferase/poly(A) polymerase family. Bacterial CCA-adding enzyme type 1 subfamily. In terms of assembly, monomer. Can also form homodimers and oligomers. Mg(2+) serves as cofactor. It depends on Ni(2+) as a cofactor.

The enzyme catalyses a tRNA precursor + 2 CTP + ATP = a tRNA with a 3' CCA end + 3 diphosphate. It carries out the reaction a tRNA with a 3' CCA end + 2 CTP + ATP = a tRNA with a 3' CCACCA end + 3 diphosphate. Its function is as follows. Catalyzes the addition and repair of the essential 3'-terminal CCA sequence in tRNAs without using a nucleic acid template. Adds these three nucleotides in the order of C, C, and A to the tRNA nucleotide-73, using CTP and ATP as substrates and producing inorganic pyrophosphate. tRNA 3'-terminal CCA addition is required both for tRNA processing and repair. Also involved in tRNA surveillance by mediating tandem CCA addition to generate a CCACCA at the 3' terminus of unstable tRNAs. While stable tRNAs receive only 3'-terminal CCA, unstable tRNAs are marked with CCACCA and rapidly degraded. The protein is Multifunctional CCA protein of Acinetobacter baylyi (strain ATCC 33305 / BD413 / ADP1).